Consider the following 1031-residue polypeptide: MMS19 nucleotide excision repair protein homolog (1031 aa).

At Ala2 the chain carries N-acetylalanine. HEAT repeat units follow at residues 867 to 905 (QRFF…RLPK), 909 to 947 (LPEL…EAPQ), 950 to 988 (SLHV…LPTS), and 991 to 1029 (LPYK…LGSP). Ser1028 carries the post-translational modification Phosphoserine.

This sequence belongs to the MET18/MMS19 family. In terms of assembly, component of the CIA complex. In the CIA complex, interacts directly with CIAO2B and CIAO3. Component of the MMXD complex, composed of CIAO1, ERCC2, CIAO2B, MMS19 and SLC25A5. Interacts with CIAO2B; the interaction is direct. Interacts with ERCC2/XPD; the interaction is direct. Interacts with ERCC3/XPB and NCOA3/RAC3. Interacts with RTEL1; the interaction mediates the association of RTEL1 with the CIA complex. Interacts with BRIP1. Interacts with KIF4A; the interaction facilitates the transfer of Fe-S clusters to KIF4A to ensure proper localization of KIF4A to the mitotic machinery components. Interacts with CCDC117; the interaction is indirect. Ubiquitinated; undergoes 'Lys-48'-linked polyubiquitination. Ubiquitously expressed with higher expression in testis.

It localises to the nucleus. Its subcellular location is the cytoplasm. The protein localises to the cytoskeleton. The protein resides in the spindle. In terms of biological role, key component of the cytosolic iron-sulfur protein assembly (CIA) complex, a multiprotein complex that mediates the incorporation of iron-sulfur cluster into apoproteins specifically involved in DNA metabolism and genomic integrity. In the CIA complex, MMS19 acts as an adapter between early-acting CIA components and a subset of cellular target Fe/S proteins such as ERCC2/XPD, FANCJ and RTEL1, thereby playing a key role in nucleotide excision repair (NER), homologous recombination-mediated double-strand break DNA repair, DNA replication and RNA polymerase II (POL II) transcription. As a CIA complex component and in collaboration with CIAO1 and CIAO2, binds to and facilitates the assembly of most cytosolic-nuclear Fe/S proteins. As part of the mitotic spindle-associated MMXD complex, plays a role in chromosome segregation, probably by facilitating iron-sulfur cluster assembly into ERCC2/XPD. Together with CIAO2, facilitates the transfer of Fe-S clusters to the motor protein KIF4A, which ensures proper localization of KIF4A to mitotic machinery components to promote the progression of mitosis. Indirectly acts as a transcriptional coactivator of estrogen receptor (ER), via its role in iron-sulfur insertion into some component of the TFIIH-machinery. The polypeptide is MMS19 nucleotide excision repair protein homolog (Mus musculus (Mouse)).